An 85-amino-acid chain; its full sequence is Small ribosomal subunit protein uS17 (85 aa).

The protein belongs to the universal ribosomal protein uS17 family. Part of the 30S ribosomal subunit.

One of the primary rRNA binding proteins, it binds specifically to the 5'-end of 16S ribosomal RNA. In Mycoplasma capricolum subsp. capricolum (strain California kid / ATCC 27343 / NCTC 10154), this protein is Small ribosomal subunit protein uS17.